Consider the following 140-residue polypeptide: Resuscitation-promoting factor RpfC (140 aa).

Residues 1 to 31 (MTRIAKPLIKSAMAAGLVTASMSLSTAVAHA) form the signal peptide.

This sequence belongs to the transglycosylase family. Rpf subfamily.

Its subcellular location is the secreted. Its function is as follows. Factor that stimulates resuscitation of dormant cells. Has peptidoglycan (PG) hydrolytic activity. This is Resuscitation-promoting factor RpfC (rpfC) from Mycobacterium tuberculosis (strain ATCC 35801 / TMC 107 / Erdman).